The primary structure comprises 310 residues: Putative S-adenosyl-L-methionine-dependent methyltransferase MMAR_0356 (310 aa).

S-adenosyl-L-methionine-binding positions include Asp137 and 166–167; that span reads DL.

This sequence belongs to the UPF0677 family.

Its function is as follows. Exhibits S-adenosyl-L-methionine-dependent methyltransferase activity. The chain is Putative S-adenosyl-L-methionine-dependent methyltransferase MMAR_0356 from Mycobacterium marinum (strain ATCC BAA-535 / M).